The primary structure comprises 302 residues: Deoxyhypusine hydroxylase (302 aa).

HEAT-like PBS-type repeat units follow at residues 23–49 (ERFR…AFDD), 54–80 (LKHE…VLKD), 87–113 (VRHE…YKQD), 175–201 (DRYR…GLKD), 206–232 (FRHE…NLED), and 239–265 (VRHE…YAED). Residues His-56, Glu-57, His-89, and Glu-90 each contribute to the Fe cation site. Fe cation-binding residues include His-208, Glu-209, His-241, and Glu-242.

This sequence belongs to the deoxyhypusine hydroxylase family. The cofactor is Fe(2+).

Its subcellular location is the endoplasmic reticulum membrane. It catalyses the reaction [eIF5A protein]-deoxyhypusine + AH2 + O2 = [eIF5A protein]-hypusine + A + H2O. It participates in protein modification; eIF5A hypusination. Functionally, catalyzes the hydroxylation of the N(6)-(4-aminobutyl)-L-lysine intermediate to form hypusine, an essential post-translational modification only found in mature eIF-5A factor. Essential for organismal viability and plays a role in a wide number of important processes such as cell growth and proliferation, and regulates induction of autophagy and protein synthesis. Has a role in eIF-5A-mediated translational control. This chain is Deoxyhypusine hydroxylase, found in Drosophila melanogaster (Fruit fly).